Consider the following 264-residue polypeptide: Triosephosphate isomerase (264 aa).

Residue 12–14 (NWK) participates in substrate binding. Histidine 104 (electrophile) is an active-site residue. Catalysis depends on glutamate 176, which acts as the Proton acceptor. Substrate is bound by residues glycine 182, serine 222, and 243 to 244 (GG).

Belongs to the triosephosphate isomerase family. In terms of assembly, homodimer.

The protein localises to the cytoplasm. The enzyme catalyses D-glyceraldehyde 3-phosphate = dihydroxyacetone phosphate. It functions in the pathway carbohydrate biosynthesis; gluconeogenesis. Its pathway is carbohydrate degradation; glycolysis; D-glyceraldehyde 3-phosphate from glycerone phosphate: step 1/1. Functionally, involved in the gluconeogenesis. Catalyzes stereospecifically the conversion of dihydroxyacetone phosphate (DHAP) to D-glyceraldehyde-3-phosphate (G3P). In Bifidobacterium adolescentis (strain ATCC 15703 / DSM 20083 / NCTC 11814 / E194a), this protein is Triosephosphate isomerase.